The sequence spans 430 residues: Lipoyl synthase, mitochondrial (430 aa).

Residues 1-29 constitute a mitochondrion transit peptide; that stretch reads MASPVPIQRLQAPLRRSLARAAALSTRSY. A compositionally biased stretch (low complexity) spans 28–58; sequence SYATIPSGPSSQPTSQESSSAASASAPATKP. A disordered region spans residues 28 to 62; that stretch reads SYATIPSGPSSQPTSQESSSAASASAPATKPRPTY. [4Fe-4S] cluster is bound by residues Cys-142, Cys-147, Cys-153, Cys-173, Cys-177, Cys-180, and Ser-390. One can recognise a Radical SAM core domain in the interval 156-379; the sequence is GSNKAAATAT…RQRALDMGFL (224 aa).

Belongs to the radical SAM superfamily. Lipoyl synthase family. The cofactor is [4Fe-4S] cluster.

Its subcellular location is the mitochondrion. It carries out the reaction [[Fe-S] cluster scaffold protein carrying a second [4Fe-4S](2+) cluster] + N(6)-octanoyl-L-lysyl-[protein] + 2 oxidized [2Fe-2S]-[ferredoxin] + 2 S-adenosyl-L-methionine + 4 H(+) = [[Fe-S] cluster scaffold protein] + N(6)-[(R)-dihydrolipoyl]-L-lysyl-[protein] + 4 Fe(3+) + 2 hydrogen sulfide + 2 5'-deoxyadenosine + 2 L-methionine + 2 reduced [2Fe-2S]-[ferredoxin]. It functions in the pathway protein modification; protein lipoylation via endogenous pathway; protein N(6)-(lipoyl)lysine from octanoyl-[acyl-carrier-protein]: step 2/2. In terms of biological role, catalyzes the radical-mediated insertion of two sulfur atoms into the C-6 and C-8 positions of the octanoyl moiety bound to the lipoyl domains of lipoate-dependent enzymes, thereby converting the octanoylated domains into lipoylated derivatives. This is Lipoyl synthase, mitochondrial from Neurospora crassa (strain ATCC 24698 / 74-OR23-1A / CBS 708.71 / DSM 1257 / FGSC 987).